Reading from the N-terminus, the 1108-residue chain is Retinal guanylyl cyclase 2 (1108 aa).

Residues 1-50 form the signal peptide; sequence MFLGPWPFSRLLSWFAISSRLSGQHGLTSSKFLRYLCLLALLPLIWWGQA. The Extracellular segment spans residues 51 to 465; sequence LPYKIGVIGP…QGKICQGGID (415 aa). A disulfide bond links cysteine 104 and cysteine 132. The chain crosses the membrane as a helical span at residues 466-490; sequence PALAMMVCFALLLALLSINGFAYFI. The Cytoplasmic portion of the chain corresponds to 491 to 1108; the sequence is RRRINKIQLI…AERQLVRNKP (618 aa). In terms of domain architecture, Protein kinase spans 532–812; the sequence is FQIISEVQSG…DEIFNQFKTF (281 aa). A Guanylate cyclase domain is found at 884-1014; that stretch reads TLYFSDIVGF…DTVNTASRME (131 aa).

Belongs to the adenylyl cyclase class-4/guanylyl cyclase family. As to quaternary structure, homodimer. Interacts with RD3; promotes the exit of GUCY2F from the endoplasmic reticulum and its trafficking to the photoreceptor outer segments. There are 9 conserved cysteine residues in sensory guanylate cyclases, 6 in the extracellular domain, which may be involved in intra- or interchain disulfide bonds. In terms of tissue distribution, expressed only in the eye.

Its subcellular location is the membrane. The protein localises to the photoreceptor outer segment membrane. The catalysed reaction is GTP = 3',5'-cyclic GMP + diphosphate. With respect to regulation, activated by GUCA1B when free calcium ions concentration is low, and inhibited by GUCA1B when free calcium ions concentration is high. Inhibited by RD3. Responsible for the synthesis of cyclic GMP (cGMP) in rods and cones of photoreceptors. Plays an essential role in phototransduction, by mediating cGMP replenishment. May also participate in the trafficking of membrane-asociated proteins to the photoreceptor outer segment membrane. The protein is Retinal guanylyl cyclase 2 (Gucy2f) of Rattus norvegicus (Rat).